Reading from the N-terminus, the 354-residue chain is UDP-N-acetylglucosamine--N-acetylmuramyl-(pentapeptide) pyrophosphoryl-undecaprenol N-acetylglucosamine transferase (354 aa).

UDP-N-acetyl-alpha-D-glucosamine-binding positions include 15-17, N127, R163, S191, I244, 263-268, and Q288; these read TGG and ALTVSE.

It belongs to the glycosyltransferase 28 family. MurG subfamily.

The protein localises to the cell inner membrane. The enzyme catalyses di-trans,octa-cis-undecaprenyl diphospho-N-acetyl-alpha-D-muramoyl-L-alanyl-D-glutamyl-meso-2,6-diaminopimeloyl-D-alanyl-D-alanine + UDP-N-acetyl-alpha-D-glucosamine = di-trans,octa-cis-undecaprenyl diphospho-[N-acetyl-alpha-D-glucosaminyl-(1-&gt;4)]-N-acetyl-alpha-D-muramoyl-L-alanyl-D-glutamyl-meso-2,6-diaminopimeloyl-D-alanyl-D-alanine + UDP + H(+). Its pathway is cell wall biogenesis; peptidoglycan biosynthesis. In terms of biological role, cell wall formation. Catalyzes the transfer of a GlcNAc subunit on undecaprenyl-pyrophosphoryl-MurNAc-pentapeptide (lipid intermediate I) to form undecaprenyl-pyrophosphoryl-MurNAc-(pentapeptide)GlcNAc (lipid intermediate II). In Aliivibrio salmonicida (strain LFI1238) (Vibrio salmonicida (strain LFI1238)), this protein is UDP-N-acetylglucosamine--N-acetylmuramyl-(pentapeptide) pyrophosphoryl-undecaprenol N-acetylglucosamine transferase.